Here is a 233-residue protein sequence, read N- to C-terminus: Ribitol-5-phosphate cytidylyltransferase (233 aa).

CTP contacts are provided by residues 7-10 (LAGG) and 80-86 (GADRNET).

Belongs to the IspD/TarI cytidylyltransferase family. TarI subfamily.

The enzyme catalyses D-ribitol 5-phosphate + CTP + H(+) = CDP-L-ribitol + diphosphate. Its pathway is cell wall biogenesis; poly(ribitol phosphate) teichoic acid biosynthesis. In terms of biological role, catalyzes the transfer of the cytidylyl group of CTP to D-ribitol 5-phosphate. This chain is Ribitol-5-phosphate cytidylyltransferase, found in Lactiplantibacillus plantarum (strain ATCC BAA-793 / NCIMB 8826 / WCFS1) (Lactobacillus plantarum).